A 245-amino-acid polypeptide reads, in one-letter code: Probable transcriptional regulatory protein APH_0480 (245 aa).

The protein belongs to the TACO1 family.

It is found in the cytoplasm. The polypeptide is Probable transcriptional regulatory protein APH_0480 (Anaplasma phagocytophilum (strain HZ)).